The chain runs to 194 residues: Adenylate kinase isoenzyme 1 (194 aa).

The residue at position 1 (M1) is an N-acetylmethionine. 18-23 (GSGKGT) is a binding site for ATP. S38 carries the post-translational modification Phosphoserine. Positions 38–67 (STGDLLRAEVSSGSSRGKMLSSIMEKGELV) are NMP. Residues T39, R44, 65 to 67 (ELV), 94 to 97 (GYPR), and Q101 contribute to the AMP site. The interval 131-141 (KRGETSGRVDD) is LID. ATP is bound at residue R132. 2 residues coordinate AMP: R138 and R149. G177 provides a ligand contact to ATP.

The protein belongs to the adenylate kinase family. AK1 subfamily. Monomer. It depends on Mg(2+) as a cofactor.

The protein resides in the cytoplasm. It catalyses the reaction a ribonucleoside 5'-phosphate + ATP = a ribonucleoside 5'-diphosphate + ADP. It carries out the reaction AMP + ATP = 2 ADP. The enzyme catalyses dAMP + ATP = dADP + ADP. The catalysed reaction is dATP + AMP = dADP + ADP. It catalyses the reaction dAMP + dATP = 2 dADP. It carries out the reaction a 2'-deoxyribonucleoside 5'-diphosphate + ATP = a 2'-deoxyribonucleoside 5'-triphosphate + ADP. The enzyme catalyses a ribonucleoside 5'-diphosphate + ATP = a ribonucleoside 5'-triphosphate + ADP. The catalysed reaction is CDP + GTP = CTP + GDP. It catalyses the reaction GDP + ATP = GTP + ADP. It carries out the reaction UDP + ATP = UTP + ADP. The enzyme catalyses GTP + UDP = UTP + GDP. The catalysed reaction is dTDP + GTP = dTTP + GDP. It catalyses the reaction dCDP + GTP = dCTP + GDP. It carries out the reaction dGDP + ATP = dGTP + ADP. The enzyme catalyses dADP + GTP = dATP + GDP. The catalysed reaction is thiamine diphosphate + ADP = thiamine triphosphate + AMP. Functionally, catalyzes the reversible transfer of the terminal phosphate group between ATP and AMP. Also displays broad nucleoside diphosphate kinase activity. Plays an important role in cellular energy homeostasis and in adenine nucleotide metabolism. Also catalyzes at a very low rate the synthesis of thiamine triphosphate (ThTP) from thiamine diphosphate (ThDP) and ADP. The sequence is that of Adenylate kinase isoenzyme 1 (Ak1) from Rattus norvegicus (Rat).